The primary structure comprises 118 residues: Large ribosomal subunit protein bL17 (118 aa).

Belongs to the bacterial ribosomal protein bL17 family. Part of the 50S ribosomal subunit. Contacts protein L32.

The sequence is that of Large ribosomal subunit protein bL17 from Campylobacter concisus (strain 13826).